The following is a 166-amino-acid chain: Regulatory protein RecX (166 aa).

The protein belongs to the RecX family.

It localises to the cytoplasm. Its function is as follows. Modulates RecA activity. The protein is Regulatory protein RecX of Salmonella paratyphi C (strain RKS4594).